A 362-amino-acid polypeptide reads, in one-letter code: Biotin synthase (362 aa).

The Radical SAM core domain maps to asparagine 46–arginine 273. [4Fe-4S] cluster-binding residues include cysteine 61, cysteine 65, and cysteine 68. [2Fe-2S] cluster-binding residues include cysteine 105, cysteine 136, cysteine 196, and arginine 268. The tract at residues proline 320–valine 339 is disordered.

It belongs to the radical SAM superfamily. Biotin synthase family. In terms of assembly, homodimer. Requires [4Fe-4S] cluster as cofactor. The cofactor is [2Fe-2S] cluster.

The enzyme catalyses (4R,5S)-dethiobiotin + (sulfur carrier)-SH + 2 reduced [2Fe-2S]-[ferredoxin] + 2 S-adenosyl-L-methionine = (sulfur carrier)-H + biotin + 2 5'-deoxyadenosine + 2 L-methionine + 2 oxidized [2Fe-2S]-[ferredoxin]. It functions in the pathway cofactor biosynthesis; biotin biosynthesis; biotin from 7,8-diaminononanoate: step 2/2. Catalyzes the conversion of dethiobiotin (DTB) to biotin by the insertion of a sulfur atom into dethiobiotin via a radical-based mechanism. The polypeptide is Biotin synthase (Aeromonas hydrophila subsp. hydrophila (strain ATCC 7966 / DSM 30187 / BCRC 13018 / CCUG 14551 / JCM 1027 / KCTC 2358 / NCIMB 9240 / NCTC 8049)).